A 351-amino-acid chain; its full sequence is Methionine import ATP-binding protein MetN (351 aa).

In terms of domain architecture, ABC transporter spans 2–238 (IKLNHINKTY…PKHPITRELI (237 aa)). Residue 35-42 (GYSGAGKS) participates in ATP binding.

This sequence belongs to the ABC transporter superfamily. Methionine importer (TC 3.A.1.24) family. As to quaternary structure, the complex is composed of two ATP-binding proteins (MetN), two transmembrane proteins (MetI) and a solute-binding protein (MetQ).

The protein localises to the cell inner membrane. It catalyses the reaction L-methionine(out) + ATP + H2O = L-methionine(in) + ADP + phosphate + H(+). The enzyme catalyses D-methionine(out) + ATP + H2O = D-methionine(in) + ADP + phosphate + H(+). In terms of biological role, part of the ABC transporter complex MetNIQ involved in methionine import. Responsible for energy coupling to the transport system. The chain is Methionine import ATP-binding protein MetN from Helicobacter hepaticus (strain ATCC 51449 / 3B1).